Reading from the N-terminus, the 823-residue chain is Ciliated left-right organizer ZP-N domains-containing protein (823 aa).

Residues 1–22 (MWGSPALAWAVWLACVQPTVFP) form the signal peptide. Disordered stretches follow at residues 206–242 (MGLY…LLPL), 269–422 (LVHI…DLLH), 434–520 (GPFL…SPSP), and 632–656 (LPRE…EGPG). The span at 216 to 230 (TVTVQSPRQGLLQRW) shows a compositional bias: pro residues. Over residues 389-402 (GPETPPAGVPPAAS) the composition is skewed to low complexity.

The protein resides in the secreted. Its function is as follows. Plays a role in left-right patterning process. This chain is Ciliated left-right organizer ZP-N domains-containing protein, found in Homo sapiens (Human).